We begin with the raw amino-acid sequence, 232 residues long: Phosphatidylserine decarboxylase proenzyme (232 aa).

Ser-190 functions as the Schiff-base intermediate with substrate; via pyruvic acid in the catalytic mechanism. The residue at position 190 (Ser-190) is a Pyruvic acid (Ser); by autocatalysis.

The protein belongs to the phosphatidylserine decarboxylase family. PSD-A subfamily. As to quaternary structure, heterodimer of a large membrane-associated beta subunit and a small pyruvoyl-containing alpha subunit. The cofactor is pyruvate. In terms of processing, is synthesized initially as an inactive proenzyme. Formation of the active enzyme involves a self-maturation process in which the active site pyruvoyl group is generated from an internal serine residue via an autocatalytic post-translational modification. Two non-identical subunits are generated from the proenzyme in this reaction, and the pyruvate is formed at the N-terminus of the alpha chain, which is derived from the carboxyl end of the proenzyme. The post-translation cleavage follows an unusual pathway, termed non-hydrolytic serinolysis, in which the side chain hydroxyl group of the serine supplies its oxygen atom to form the C-terminus of the beta chain, while the remainder of the serine residue undergoes an oxidative deamination to produce ammonia and the pyruvoyl prosthetic group on the alpha chain.

It localises to the cell membrane. The catalysed reaction is a 1,2-diacyl-sn-glycero-3-phospho-L-serine + H(+) = a 1,2-diacyl-sn-glycero-3-phosphoethanolamine + CO2. The protein operates within phospholipid metabolism; phosphatidylethanolamine biosynthesis; phosphatidylethanolamine from CDP-diacylglycerol: step 2/2. Functionally, catalyzes the formation of phosphatidylethanolamine (PtdEtn) from phosphatidylserine (PtdSer). This Rhodopseudomonas palustris (strain BisB18) protein is Phosphatidylserine decarboxylase proenzyme.